Here is a 218-residue protein sequence, read N- to C-terminus: Small ribosomal subunit protein uS3c (218 aa).

The KH type-2 domain maps to 47–118; sequence VQKNMRTSSG…KLNIAVTRIA (72 aa).

It belongs to the universal ribosomal protein uS3 family. In terms of assembly, part of the 30S ribosomal subunit.

It is found in the plastid. The protein localises to the chloroplast. The polypeptide is Small ribosomal subunit protein uS3c (rps3) (Nicotiana sylvestris (Wood tobacco)).